The sequence spans 393 residues: Formate-dependent phosphoribosylglycinamide formyltransferase (393 aa).

Residues 22-23 (EL) and Glu82 contribute to the N(1)-(5-phospho-beta-D-ribosyl)glycinamide site. ATP-binding positions include Arg114, Lys155, 160 to 165 (SSGKGQ), 195 to 198 (EGFI), and Glu203. In terms of domain architecture, ATP-grasp spans 119–308 (RLAAEELDLP…QFALHARAIL (190 aa)). Mg(2+) contacts are provided by Glu267 and Glu279. N(1)-(5-phospho-beta-D-ribosyl)glycinamide contacts are provided by residues Asp286, Lys356, and 363 to 364 (RR).

It belongs to the PurK/PurT family. As to quaternary structure, homodimer.

The enzyme catalyses N(1)-(5-phospho-beta-D-ribosyl)glycinamide + formate + ATP = N(2)-formyl-N(1)-(5-phospho-beta-D-ribosyl)glycinamide + ADP + phosphate + H(+). It participates in purine metabolism; IMP biosynthesis via de novo pathway; N(2)-formyl-N(1)-(5-phospho-D-ribosyl)glycinamide from N(1)-(5-phospho-D-ribosyl)glycinamide (formate route): step 1/1. Functionally, involved in the de novo purine biosynthesis. Catalyzes the transfer of formate to 5-phospho-ribosyl-glycinamide (GAR), producing 5-phospho-ribosyl-N-formylglycinamide (FGAR). Formate is provided by PurU via hydrolysis of 10-formyl-tetrahydrofolate. The protein is Formate-dependent phosphoribosylglycinamide formyltransferase of Pseudomonas fluorescens (strain ATCC BAA-477 / NRRL B-23932 / Pf-5).